The sequence spans 417 residues: 26S proteasome regulatory subunit RPN14 (417 aa).

6 WD repeats span residues 134–173, 176–215, 242–281, 285–325, 330–371, and 380–416; these read AHVSEITKLKFFPSGEALISSSQDMQLKIWSVKDGSNPRT, GHRATVTDIAIIDRGRNVLSASLDGTIRLWECGTGTTIHT, ISTSKKNNLEFGTYGKYVIAGHVSGVITVHNVFSKEQTIQ, KFTC…CPVG, NEGT…PAIE, and SNDDEVSQFCYVSDDESNGEVLEVGKNNFCALYNLSN.

The protein belongs to the WD repeat PAAF1/RPN14 family. In terms of assembly, associates with the 19S proteasome regulatory particle (RP). Interacts directly with RPT5 and RPT6.

The protein resides in the cytoplasm. It is found in the nucleus. Acts as a regulatory subunit of the 26 proteasome which is involved in the ATP-dependent degradation of ubiquitinated proteins. Is not a genuine component of the 26S proteasome, but an auxiliary factor that interacts with the proteasomal ATPase of 19S regulatory particle (RP). Acts as a chaperone which regulates the highly structured assembly of the 19S regulatory particle. Involved in the substrate specificity of the 26S proteasome and is especially involved in the degradation of ubiquitinated GCN4. May contribute to the stability of the 26S proteasome in some stress conditions. The polypeptide is 26S proteasome regulatory subunit RPN14 (RPN14) (Saccharomyces cerevisiae (strain ATCC 204508 / S288c) (Baker's yeast)).